We begin with the raw amino-acid sequence, 470 residues long: Asparagine--tRNA ligase (470 aa).

The protein belongs to the class-II aminoacyl-tRNA synthetase family. As to quaternary structure, homodimer.

It is found in the cytoplasm. The catalysed reaction is tRNA(Asn) + L-asparagine + ATP = L-asparaginyl-tRNA(Asn) + AMP + diphosphate + H(+). This Blochmanniella floridana protein is Asparagine--tRNA ligase.